The chain runs to 205 residues: uncharacterized protein (205 aa).

This is an uncharacterized protein from Sinorhizobium fredii (strain NBRC 101917 / NGR234).